Consider the following 319-residue polypeptide: Beta-ketoacyl-[acyl-carrier-protein] synthase III (319 aa).

Catalysis depends on residues C110 and H246. Positions 247-251 are ACP-binding; it reads QANYR. Residue N276 is part of the active site.

Belongs to the thiolase-like superfamily. FabH family. As to quaternary structure, homodimer.

The protein resides in the cytoplasm. The enzyme catalyses malonyl-[ACP] + acetyl-CoA + H(+) = 3-oxobutanoyl-[ACP] + CO2 + CoA. It functions in the pathway lipid metabolism; fatty acid biosynthesis. Its function is as follows. Catalyzes the condensation reaction of fatty acid synthesis by the addition to an acyl acceptor of two carbons from malonyl-ACP. Catalyzes the first condensation reaction which initiates fatty acid synthesis and may therefore play a role in governing the total rate of fatty acid production. Possesses both acetoacetyl-ACP synthase and acetyl transacylase activities. Its substrate specificity determines the biosynthesis of branched-chain and/or straight-chain of fatty acids. The sequence is that of Beta-ketoacyl-[acyl-carrier-protein] synthase III from Lactobacillus delbrueckii subsp. bulgaricus (strain ATCC BAA-365 / Lb-18).